We begin with the raw amino-acid sequence, 126 residues long: Holo-[acyl-carrier-protein] synthase (126 aa).

Residues Asp9 and Glu58 each coordinate Mg(2+).

This sequence belongs to the P-Pant transferase superfamily. AcpS family. Mg(2+) serves as cofactor.

It is found in the cytoplasm. It carries out the reaction apo-[ACP] + CoA = holo-[ACP] + adenosine 3',5'-bisphosphate + H(+). Functionally, transfers the 4'-phosphopantetheine moiety from coenzyme A to a Ser of acyl-carrier-protein. The sequence is that of Holo-[acyl-carrier-protein] synthase from Escherichia coli O127:H6 (strain E2348/69 / EPEC).